A 2214-amino-acid polypeptide reads, in one-letter code: Genome polyprotein (2214 aa).

Disordered regions lie at residues 1–21 (MGAQ…VATG) and 600–619 (KPQK…VNSQ). Gly-2 carries N-myristoyl glycine; by host lipidation. Over 2-1525 (GAQVSSQKVG…NLNRAMTILQ (1524 aa)) the chain is Cytoplasmic. Amphipathic alpha-helix stretches follow at residues 580–601 (QGIE…QPKP) and 581–601 (GIEE…QPKP). Positions 606-619 (TAQSTPSTSGVNSQ) are enriched in polar residues. Residues His-906 and Asp-924 each act as for protease 2A activity in the active site. Zn(2+) contacts are provided by Cys-941 and Cys-943. The active-site For protease 2A activity is the Cys-995. Positions 1001 and 1003 each coordinate Zn(2+). A membrane-binding region spans residues 1133–1205 (GDSWLKKFTE…HQSCPSQEQQ (73 aa)). The oligomerization stretch occupies residues 1133–1271 (GDSWLKKFTE…SPGTGKSIAT (139 aa)). Residues 1154–1158 (SNKIS) form an RNA-binding region. The region spanning 1237–1393 (ENTINNYIQF…SEHSIKGKLN (157 aa)) is the SF3 helicase domain. 1261 to 1268 (GSPGTGKS) lines the ATP pocket. Residues Cys-1401, Cys-1404, Cys-1413, and Cys-1418 each coordinate Zn(2+). The C4-type zinc finger occupies 1401–1418 (CKDCPQPANFKKCCPLVC). Positions 1445–1452 (ERNRRANI) are RNA-binding. The interval 1456–1461 (MEALFQ) is oligomerization. The stretch at 1526–1541 (AVTTFAAVAAVVYVMY) is an intramembrane region. At 1542–2214 (KLFAGHQGAY…TLYRRWLDSF (673 aa)) the chain is on the cytoplasmic side. Residue Tyr-1551 is modified to O-(5'-phospho-RNA)-tyrosine. One can recognise a Peptidase C3 domain in the interval 1571–1749 (GPGFDYAVAM…FAAALKRSYF (179 aa)). Catalysis depends on for protease 3C activity residues His-1610, Glu-1641, and Cys-1717. The RdRp catalytic domain maps to 1980–2095 (EKLFAFDYTG…SYPHEVDASL (116 aa)). The Mg(2+) site is built by Asp-1986 and Asp-2081.

This sequence belongs to the picornaviruses polyprotein family. As to quaternary structure, interacts with capsid protein VP1 and capsid protein VP3 to form heterotrimeric protomers. In terms of assembly, interacts with capsid protein VP0, and capsid protein VP3 to form heterotrimeric protomers. Five protomers subsequently associate to form pentamers which serve as building blocks for the capsid. Interacts with capsid protein VP2, capsid protein VP3 and capsid protein VP4 following cleavage of capsid protein VP0. Interacts with capsid protein VP1 and capsid protein VP3 in the mature capsid. As to quaternary structure, interacts with capsid protein VP0 and capsid protein VP1 to form heterotrimeric protomers. Five protomers subsequently associate to form pentamers which serve as building blocks for the capsid. Interacts with capsid protein VP4 in the mature capsid. Interacts with protein 2C; this interaction may be important for virion morphogenesis. In terms of assembly, interacts with capsid protein VP1 and capsid protein VP3. Homodimer. As to quaternary structure, homohexamer; forms a hexameric ring structure with 6-fold symmetry characteristic of AAA+ ATPases. Interacts (via N-terminus) with host RTN3 (via reticulon domain); this interaction is important for viral replication. Interacts with capsid protein VP3; this interaction may be important for virion morphogenesis. In terms of assembly, interacts with protein 3CD. Homodimer. Interacts with host GBF1. Interacts (via GOLD domain) with host ACBD3 (via GOLD domain); this interaction allows the formation of a viral protein 3A/ACBD3 heterotetramer with a 2:2 stoichiometry, which will stimulate the recruitment of host PI4KB in order to synthesize PI4P at the viral RNA replication sites. As to quaternary structure, interacts with RNA-directed RNA polymerase. In terms of assembly, interacts with protein 3AB and with RNA-directed RNA polymerase. Interacts with Viral protein genome-linked and with protein 3CD. It depends on Mg(2+) as a cofactor. In terms of processing, specific enzymatic cleavages in vivo by the viral proteases yield processing intermediates and the mature proteins. Post-translationally, myristoylation is required for the formation of pentamers during virus assembly. Further assembly of 12 pentamers and a molecule of genomic RNA generates the provirion. During virion maturation, immature virions are rendered infectious following cleavage of VP0 into VP4 and VP2. This maturation seems to be an autocatalytic event triggered by the presence of RNA in the capsid and it is followed by a conformational change infectious virion. In terms of processing, myristoylation is required during RNA encapsidation and formation of the mature virus particle. Post-translationally, VPg is uridylylated by the polymerase into VPg-pUpU. This acts as a nucleotide-peptide primer for the genomic RNA replication.

The protein localises to the virion. It localises to the host cytoplasm. The protein resides in the host cytoplasmic vesicle membrane. Its subcellular location is the host nucleus. The catalysed reaction is a ribonucleoside 5'-triphosphate + H2O = a ribonucleoside 5'-diphosphate + phosphate + H(+). The enzyme catalyses Selective cleavage of Tyr-|-Gly bond in the picornavirus polyprotein.. It catalyses the reaction RNA(n) + a ribonucleoside 5'-triphosphate = RNA(n+1) + diphosphate. It carries out the reaction Selective cleavage of Gln-|-Gly bond in the poliovirus polyprotein. In other picornavirus reactions Glu may be substituted for Gln, and Ser or Thr for Gly.. With respect to regulation, replication or transcription is subject to high level of random mutations by the nucleotide analog ribavirin. Forms an icosahedral capsid of pseudo T=3 symmetry with capsid proteins VP2 and VP3. The capsid is 300 Angstroms in diameter, composed of 60 copies of each capsid protein and enclosing the viral positive strand RNA genome. Capsid protein VP1 mainly forms the vertices of the capsid. Capsid protein VP1 interacts with host cell receptor to provide virion attachment to target host cells. This attachment induces virion internalization. Tyrosine kinases are probably involved in the entry process. After binding to its receptor, the capsid undergoes conformational changes. Capsid protein VP1 N-terminus (that contains an amphipathic alpha-helix) and capsid protein VP4 are externalized. Together, they shape a pore in the host membrane through which viral genome is translocated to host cell cytoplasm. Its function is as follows. Forms an icosahedral capsid of pseudo T=3 symmetry with capsid proteins VP2 and VP3. The capsid is 300 Angstroms in diameter, composed of 60 copies of each capsid protein and enclosing the viral positive strand RNA genome. Functionally, lies on the inner surface of the capsid shell. After binding to the host receptor, the capsid undergoes conformational changes. Capsid protein VP4 is released, Capsid protein VP1 N-terminus is externalized, and together, they shape a pore in the host membrane through which the viral genome is translocated into the host cell cytoplasm. In terms of biological role, component of immature procapsids, which is cleaved into capsid proteins VP4 and VP2 after maturation. Allows the capsid to remain inactive before the maturation step. Cysteine protease that cleaves viral polyprotein and specific host proteins. It is responsible for the autocatalytic cleavage between the P1 and P2 regions, which is the first cleavage occurring in the polyprotein. Also cleaves the host translation initiation factor EIF4G1, in order to shut down the capped cellular mRNA translation. Inhibits the host nucleus-cytoplasm protein and RNA trafficking by cleaving host members of the nuclear pores. Counteracts stress granule formation probably by antagonizing its assembly or promoting its dissassembly. Cleaves and inhibits host IFIH1/MDA5, thereby inhibiting the type-I IFN production and the establishment of the antiviral state. Cleaves and inhibits host MAVS, thereby inhibiting the type-I IFN production and the establishment of the antiviral state. Its function is as follows. Plays an essential role in the virus replication cycle by acting as a viroporin. Creates a pore in the host endoplasmic reticulum and as a consequence releases Ca2+ in the cytoplasm of infected cell. In turn, high levels of cytoplasmic calcium may trigger membrane trafficking and transport of viral ER-associated proteins to viroplasms, sites of viral genome replication. Functionally, induces and associates with structural rearrangements of intracellular membranes. Displays RNA-binding, nucleotide binding and NTPase activities. May play a role in virion morphogenesis and viral RNA encapsidation by interacting with the capsid protein VP3. In terms of biological role, localizes the viral replication complex to the surface of membranous vesicles. Together with protein 3CD binds the Cis-Active RNA Element (CRE) which is involved in RNA synthesis initiation. Acts as a cofactor to stimulate the activity of 3D polymerase, maybe through a nucleid acid chaperone activity. Localizes the viral replication complex to the surface of membranous vesicles. It inhibits host cell endoplasmic reticulum-to-Golgi apparatus transport and causes the disassembly of the Golgi complex, possibly through GBF1 interaction. This would result in depletion of MHC, trail receptors and IFN receptors at the host cell surface. Plays an essential role in viral RNA replication by recruiting ACBD3 and PI4KB at the viral replication sites, thereby allowing the formation of the rearranged membranous structures where viral replication takes place. Its function is as follows. Acts as a primer for viral RNA replication and remains covalently bound to viral genomic RNA. VPg is uridylylated prior to priming replication into VPg-pUpU. The oriI viral genomic sequence may act as a template for this. The VPg-pUpU is then used as primer on the genomic RNA poly(A) by the RNA-dependent RNA polymerase to replicate the viral genome. During genome replication, the VPg-RNA linkage is removed by the host TDP2, thereby accelerating replication. During the late stage of the replication cycle, host TDP2 is excluded from sites of viral RNA synthesis and encapsidation, allowing for the generation of progeny virions. Functionally, involved in the viral replication complex and viral polypeptide maturation. It exhibits protease activity with a specificity and catalytic efficiency that is different from protease 3C. Protein 3CD lacks polymerase activity. Protein 3CD binds to the 5'UTR of the viral genome. In terms of biological role, replicates the viral genomic RNA on the surface of intracellular membranes. May form linear arrays of subunits that propagate along a strong head-to-tail interaction called interface-I. Covalently attaches UMP to a tyrosine of VPg, which is used to prime RNA synthesis. The positive stranded RNA genome is first replicated at virus induced membranous vesicles, creating a dsRNA genomic replication form. This dsRNA is then used as template to synthesize positive stranded RNA genomes. ss(+)RNA genomes are either translated, replicated or encapsidated. Major viral protease that mediates proteolytic processing of the polyprotein. Cleaves host EIF5B, contributing to host translation shutoff. Also cleaves host PABPC1, contributing to host translation shutoff. Cleaves host NLRP1, triggers host N-glycine-mediated degradation of the autoinhibitory NLRP1 N-terminal fragment. This chain is Genome polyprotein, found in Coxsackievirus A24 (strain EH24/70).